The primary structure comprises 152 residues: Transcriptional regulator MraZ (152 aa).

SpoVT-AbrB domains lie at 5–52 (ATQI…TLSE) and 81–124 (ASEC…DEQA).

The protein belongs to the MraZ family. In terms of assembly, forms oligomers.

It localises to the cytoplasm. The protein resides in the nucleoid. In terms of biological role, negatively regulates its own expression and that of the subsequent genes in the proximal part of the division and cell wall (dcw) gene cluster. Acts by binding directly to DNA. May also regulate the expression of genes outside the dcw cluster. This chain is Transcriptional regulator MraZ, found in Photorhabdus laumondii subsp. laumondii (strain DSM 15139 / CIP 105565 / TT01) (Photorhabdus luminescens subsp. laumondii).